Reading from the N-terminus, the 138-residue chain is Phosphoribosyl-AMP cyclohydrolase (138 aa).

Residue Asp84 participates in Mg(2+) binding. Cys85 contacts Zn(2+). Asp86 and Asp88 together coordinate Mg(2+). Residues Cys102 and Cys109 each coordinate Zn(2+).

It belongs to the PRA-CH family. In terms of assembly, homodimer. Mg(2+) is required as a cofactor. Requires Zn(2+) as cofactor.

Its subcellular location is the cytoplasm. The enzyme catalyses 1-(5-phospho-beta-D-ribosyl)-5'-AMP + H2O = 1-(5-phospho-beta-D-ribosyl)-5-[(5-phospho-beta-D-ribosylamino)methylideneamino]imidazole-4-carboxamide. It participates in amino-acid biosynthesis; L-histidine biosynthesis; L-histidine from 5-phospho-alpha-D-ribose 1-diphosphate: step 3/9. Functionally, catalyzes the hydrolysis of the adenine ring of phosphoribosyl-AMP. The sequence is that of Phosphoribosyl-AMP cyclohydrolase from Burkholderia orbicola (strain MC0-3).